Reading from the N-terminus, the 213-residue chain is Cell division protein SepF 2 (213 aa).

The tract at residues 16-89 (EDDGYDGRGF…ASLAAESSRP (74 aa)) is disordered. The span at 27-39 (PDDDFEPELDPEP) shows a compositional bias: acidic residues.

This sequence belongs to the SepF family. In terms of assembly, homodimer. Interacts with FtsZ.

The protein resides in the cytoplasm. Cell division protein that is part of the divisome complex and is recruited early to the Z-ring. Probably stimulates Z-ring formation, perhaps through the cross-linking of FtsZ protofilaments. Its function overlaps with FtsA. The protein is Cell division protein SepF 2 of Streptomyces coelicolor (strain ATCC BAA-471 / A3(2) / M145).